The primary structure comprises 570 residues: Dwarfin sma-4 (570 aa).

Positions 115 to 134 are disordered; sequence SSQASSQPPPTPTVNPTPIP. Residues 121–134 show a composition bias toward pro residues; it reads QPPPTPTVNPTPIP. Positions 150 to 273 constitute an MH1 domain; that stretch reads QISHVLQCYQ…YERVVSNRIT (124 aa). Residues Cys203, Cys247, Cys258, and His263 each contribute to the Zn(2+) site. Residues 350–570 form the MH2 domain; that stretch reads WCSIIYYELD…LKNSSQFGSS (221 aa).

Belongs to the dwarfin/SMAD family.

Its subcellular location is the cytoplasm. It localises to the nucleus. Functionally, involved in TGF-beta pathway. This Caenorhabditis elegans protein is Dwarfin sma-4 (sma-4).